Consider the following 666-residue polypeptide: Endogenous retrovirus group K member 9 Gag polyprotein (666 aa).

A lipid anchor (N-myristoyl glycine) is attached at G2. Positions 165-264 (GKGPELVGPS…APPSRQGSEL (100 aa)) are disordered. Pro residues predominate over residues 232–247 (GMPPAPQGRAPYPQPP). CCHC-type zinc fingers lie at residues 544–561 (GKCY…NCPV) and 580–597 (DLCP…QCRS). A disordered region spans residues 598 to 641 (KFDKNGQPLSGNEQRGQPQAPQQTGAFPIQPFVPQGFQGQQPPL). Over residues 604 to 622 (QPLSGNEQRGQPQAPQQTG) the composition is skewed to polar residues. Residues 624-640 (FPIQPFVPQGFQGQQPP) are compositionally biased toward low complexity.

Belongs to the beta type-B retroviral Gag protein family. HERV class-II K(HML-2) gag subfamily. In terms of processing, myristoylation is essential for retroviral assembly. Alteration of the glycine residue leads to a block in the budding of particles and an accumulation of Gag inside the cell. Post-translationally, specific enzymatic cleavages may yield mature proteins.

Its subcellular location is the cell membrane. The products of the Gag polyproteins of infectious retroviruses perform highly complex orchestrated tasks during the assembly, budding, maturation, and infection stages of the viral replication cycle. During viral assembly, the proteins form membrane associations and self-associations that ultimately result in budding of an immature virion from the infected cell. Gag precursors also function during viral assembly to selectively bind and package two plus strands of genomic RNA. Endogenous Gag proteins may have kept, lost or modified their original function during evolution. The sequence is that of Endogenous retrovirus group K member 9 Gag polyprotein (ERVK-9) from Homo sapiens (Human).